The following is a 345-amino-acid chain: Serpentine receptor class beta-13 (345 aa).

Residues 1 to 22 lie on the Extracellular side of the membrane; that stretch reads MAGINQTKCDLGFQITFNTVYR. The N-linked (GlcNAc...) asparagine glycan is linked to asparagine 5. Residues 23–43 traverse the membrane as a helical segment; the sequence is FSQFYTFSVSSFAVPGLIYFM. Residues 44 to 58 lie on the Cytoplasmic side of the membrane; that stretch reads FKRLFQLYFHGNLKT. The chain crosses the membrane as a helical span at residues 59–79; the sequence is LLIAYFISILLYAVMLCFAFG. The Extracellular portion of the chain corresponds to 80-103; the sequence is YQFFVPFFIKSNCDLIINKTLFKY. Residue asparagine 97 is glycosylated (N-linked (GlcNAc...) asparagine). A helical membrane pass occupies residues 104–124; the sequence is IHTSVIFLLTTPMMFPLGFSI. Over 125–142 the chain is Cytoplasmic; it reads ERFTAMAMASRYENIRTL. A helical membrane pass occupies residues 143-163; the sequence is IGPVLVIFLIIPNCIIFYFLF. Residues 164–189 are Extracellular-facing; the sequence is QHETYDDTFISFLMLPNTTAVNFNTY. Asparagine 180 carries N-linked (GlcNAc...) asparagine glycosylation. A helical transmembrane segment spans residues 190–210; that stretch reads LWFLLYLNIGNLALNVLLLLV. Over 211-241 the chain is Cytoplasmic; the sequence is HRKFKRRLLLHKTSLSTRYAIEEISQSSKFT. Residues 242 to 262 traverse the membrane as a helical segment; the sequence is LIITFTHLLFFGCNTICSILV. Residues 263 to 280 are Extracellular-facing; it reads RVLGEPFFGSFINHSVAR. Asparagine 275 carries N-linked (GlcNAc...) asparagine glycosylation. Residues 281-301 form a helical membrane-spanning segment; it reads GVNCAVPTYNLVIVVVGFVSL. Residues 302–345 lie on the Cytoplasmic side of the membrane; it reads SKLNSRRQQEVQTTVQLKTTGKEGARNYDNITANQWATITQIGF.

Belongs to the nematode receptor-like protein srb family. As to expression, expressed in the head sensory neurons ASI, ASK and AWB. Not expressed in male somatic gonads or sperm.

The protein localises to the cell membrane. Its subcellular location is the perikaryon. It localises to the cell projection. It is found in the dendrite. Functionally, G-protein coupled receptor that antagonizes the negative effects of the gcy-35 oxygen sensor on spermatogenesis. This leads to the maintenance of mitochondrial function in developing spermatocytes and/or spermatids prior to testis maturation during the early larval stages. Regulates the navigational capacity of sperm during hyperoxic conditions ensuring the proper targeting of sperm derived from males to the fertilization site in the uterus of hermaphrodites. May act in the same signaling pathway as the neuropeptide flp-21. The chain is Serpentine receptor class beta-13 from Caenorhabditis elegans.